Consider the following 518-residue polypeptide: MARARRVKRDSVTHIYQTCKQAGTCPSDVVNKVEQTTVADNILKYGSAGVFFGGLGIGTGRGTGGATGYVPLGEGPGVRVGGTPTVVRPSLVPEAIGPVDILPIDTIAPVEPTASSLVPLTESSGADLLPGEVETIAEIHPIPEGPTIDSPVVTTTTGSSAVLEVAPEPVPPTRVRIARTQYHNPSFQILTESTPAQGESSLADHILVTSGSGGQRIGGDITDEIELTEFPSRYTFEIEEPTPPRKSSTPLQTVASAVRRRGFSLTNRRLVQQVAVDNPLFLSQPSKMVRFSFDNPAFEEEVTNIFEQDVNSFEEPPDRDFLDIKQLGRPQYSTTPAGYIRVSRLGTRGTIRTRSGAQIGSQVHFYRDLSSINTEDPIELQLLGQHSGDATIVQGPVESTFIDMDIAENPLSETIDASSNDLLLDETVEDFSGSQLVIGNRRSTTSYTVPRFETTRSSSYYVQDTDGYYVAYPESRDTIDIIYPTPELPVVVIHTHDNSGDFYLHPSLRRRKRKRKYL.

A Nuclear localization signal motif is present at residues Met-1 to Asp-10. Cys-19 and Cys-25 are joined by a disulfide. The Nuclear localization signal signature appears at Arg-510–Tyr-517.

This sequence belongs to the papillomaviridae L2 protein family. As to quaternary structure, interacts with major capsid protein L1. Interacts with E2; this interaction inhibits E2 transcriptional activity but not the DNA replication function E2. Interacts with host GADD45GIP1. Interacts with host HSPA8; this interaction is required for L2 nuclear translocation. Interacts with host importins KPNB2 and KPNB3. Forms a complex with importin alpha2-beta1 heterodimers via interaction with the importin alpha2 adapter. Interacts with host DYNLT1; this interaction is essential for virus intracellular transport during entry. Interacts (via C-terminus) with host retromer subunits VPS35 and VPS29. In terms of processing, highly phosphorylated.

The protein resides in the virion. It localises to the host nucleus. The protein localises to the host early endosome. It is found in the host Golgi apparatus. Its function is as follows. Minor protein of the capsid that localizes along the inner surface of the virion, within the central cavities beneath the L1 pentamers. Plays a role in capsid stabilization through interaction with the major capsid protein L1. Once the virion enters the host cell, L2 escorts the genomic DNA into the nucleus by promoting escape from the endosomal compartments and traffic through the host Golgi network. Mechanistically, the C-terminus of L2 possesses a cell-penetrating peptide that protudes from the host endosome, interacts with host cytoplasmic retromer cargo and thereby mediates the capsid delivery to the host trans-Golgi network. Plays a role through its interaction with host dynein in the intracellular microtubule-dependent transport of viral capsid toward the nucleus. Mediates the viral genome import into the nucleus through binding to host importins. Once within the nucleus, L2 localizes viral genomes to host PML bodies in order to activate early gene expression for establishment of infection. Later on, promotes late gene expression by interacting with the viral E2 protein and by inhibiting its transcriptional activation functions. During virion assembly, encapsidates the genome by direct interaction with the viral DNA. This Homo sapiens (Human) protein is Minor capsid protein L2.